Reading from the N-terminus, the 166-residue chain is NAD(P)H-quinone oxidoreductase subunit I, chloroplastic (166 aa).

4Fe-4S ferredoxin-type domains are found at residues 55–84 (GRIH…VDWK) and 95–124 (LNYS…MTEE). [4Fe-4S] cluster is bound by residues cysteine 64, cysteine 67, cysteine 70, cysteine 74, cysteine 104, cysteine 107, cysteine 110, and cysteine 114.

The protein belongs to the complex I 23 kDa subunit family. As to quaternary structure, NDH is composed of at least 16 different subunits, 5 of which are encoded in the nucleus. [4Fe-4S] cluster serves as cofactor.

The protein resides in the plastid. The protein localises to the chloroplast thylakoid membrane. It carries out the reaction a plastoquinone + NADH + (n+1) H(+)(in) = a plastoquinol + NAD(+) + n H(+)(out). The catalysed reaction is a plastoquinone + NADPH + (n+1) H(+)(in) = a plastoquinol + NADP(+) + n H(+)(out). Functionally, NDH shuttles electrons from NAD(P)H:plastoquinone, via FMN and iron-sulfur (Fe-S) centers, to quinones in the photosynthetic chain and possibly in a chloroplast respiratory chain. The immediate electron acceptor for the enzyme in this species is believed to be plastoquinone. Couples the redox reaction to proton translocation, and thus conserves the redox energy in a proton gradient. The polypeptide is NAD(P)H-quinone oxidoreductase subunit I, chloroplastic (Marshallia caespitosa (Barbara's buttons)).